The following is a 541-amino-acid chain: RING finger protein 37 (541 aa).

Residues 258 to 338 (DVPEEFLDPI…DHFLLQHSIP (81 aa)) form the U-box domain. Asymmetric dimethylarginine is present on Arg451. Residues 483 to 528 (CASCKRVFSPYFKKEPVYQLPCGHLLCRPCLGEKQRSLPMTCTACQ) form an RING-type zinc finger.

As to quaternary structure, interacts with UBE2L3. Interacts with VCP. As to expression, expressed in liver, heart, brain, kidney and testis.

It is found in the nucleus. It carries out the reaction S-ubiquitinyl-[E2 ubiquitin-conjugating enzyme]-L-cysteine + [acceptor protein]-L-lysine = [E2 ubiquitin-conjugating enzyme]-L-cysteine + N(6)-ubiquitinyl-[acceptor protein]-L-lysine.. It functions in the pathway protein modification; protein ubiquitination. Functionally, may have a ubiquitin-protein ligase activity acting as an E3 ubiquitin-protein ligase or as a ubiquitin-ubiquitin ligase promoting elongation of ubiquitin chains on substrates. This chain is RING finger protein 37, found in Homo sapiens (Human).